Reading from the N-terminus, the 245-residue chain is Chromosome partition protein MukE (245 aa).

Positions 213–245 are disordered; the sequence is PESIAAEKATADDESAVSNEEDFEYDDNQEGAE. Residues 224–245 are compositionally biased toward acidic residues; sequence DDESAVSNEEDFEYDDNQEGAE.

It belongs to the MukE family. In terms of assembly, interacts, and probably forms a ternary complex, with MukF and MukB. The complex formation is stimulated by calcium or magnesium.

It localises to the cytoplasm. Its subcellular location is the nucleoid. Functionally, involved in chromosome condensation, segregation and cell cycle progression. May participate in facilitating chromosome segregation by condensation DNA from both sides of a centrally located replisome during cell division. Probably acts via its interaction with MukB and MukF. This Actinobacillus succinogenes (strain ATCC 55618 / DSM 22257 / CCUG 43843 / 130Z) protein is Chromosome partition protein MukE.